A 144-amino-acid polypeptide reads, in one-letter code: MLTPKRVKHRKQHRPSLAGKANKGNTITYGDYGLQALEPAWITNRQIEAARIAINRYVKRGGKLWIKIFPDRPLTVKPAETRMGKGKGSPEHWVAVVKPGRVMFELSGVSEEVAREAMRLAAHKLPVKCKFLKREEMGGEVSES.

Residues 1–14 are compositionally biased toward basic residues; it reads MLTPKRVKHRKQHR. The segment at 1–22 is disordered; sequence MLTPKRVKHRKQHRPSLAGKAN.

This sequence belongs to the universal ribosomal protein uL16 family. As to quaternary structure, part of the 50S ribosomal subunit.

Its function is as follows. Binds 23S rRNA and is also seen to make contacts with the A and possibly P site tRNAs. The chain is Large ribosomal subunit protein uL16 from Syntrophomonas wolfei subsp. wolfei (strain DSM 2245B / Goettingen).